The following is a 589-amino-acid chain: Protein kinase G11A (589 aa).

Residues 1–167 (MASKAMPRAP…SACSSISSVT (167 aa)) are disordered. 3 stretches are compositionally biased toward polar residues: residues 15–36 (NLQSLKLCSQNDSSLETTSPSK), 46–55 (AESSKPNSEV), and 63–76 (TQHQNESIDLTGSN). Basic and acidic residues predominate over residues 91–100 (RLADEEKGVV). Residues 142-165 (SSSRCRPSTSSDVSDESACSSISS) are compositionally biased toward low complexity. The Protein kinase domain maps to 195 to 533 (FKLLKKLGCG…ATEIKQHPFF (339 aa)). Residues 201 to 209 (LGCGDIGSV) and Lys224 contribute to the ATP site. Catalysis depends on Asp320, which acts as the Proton acceptor. Positions 551 to 589 (RPVEIERPPKQPVSTSEPAAAPSDAAQKSSDSYLEFDFF) are disordered.

The protein belongs to the protein kinase superfamily. Ser/Thr protein kinase family.

It catalyses the reaction L-seryl-[protein] + ATP = O-phospho-L-seryl-[protein] + ADP + H(+). The catalysed reaction is L-threonyl-[protein] + ATP = O-phospho-L-threonyl-[protein] + ADP + H(+). In terms of biological role, may play a role in the regulation of metabolism and signal transduction processes. The protein is Protein kinase G11A of Oryza sativa subsp. indica (Rice).